The sequence spans 366 residues: Alanine racemase (366 aa).

The active-site Proton acceptor; specific for D-alanine is the Lys-33. Lys-33 is subject to N6-(pyridoxal phosphate)lysine. Arg-129 provides a ligand contact to substrate. Tyr-253 acts as the Proton acceptor; specific for L-alanine in catalysis. Met-301 lines the substrate pocket.

This sequence belongs to the alanine racemase family. The cofactor is pyridoxal 5'-phosphate.

The catalysed reaction is L-alanine = D-alanine. Its pathway is amino-acid biosynthesis; D-alanine biosynthesis; D-alanine from L-alanine: step 1/1. Its function is as follows. Catalyzes the interconversion of L-alanine and D-alanine. May also act on other amino acids. This chain is Alanine racemase (alr), found in Xanthomonas oryzae pv. oryzae (strain KACC10331 / KXO85).